We begin with the raw amino-acid sequence, 77 residues long: Small ribosomal subunit protein bS16 (77 aa).

It belongs to the bacterial ribosomal protein bS16 family.

In Wolinella succinogenes (strain ATCC 29543 / DSM 1740 / CCUG 13145 / JCM 31913 / LMG 7466 / NCTC 11488 / FDC 602W) (Vibrio succinogenes), this protein is Small ribosomal subunit protein bS16.